The sequence spans 628 residues: (+)-alpha pinene synthase 1, chloroplastic (628 aa).

Mg(2+) is bound by residues Asp-379, Asp-383, and Asp-531. A DDXXD motif motif is present at residues 379–383 (DDIYD).

It belongs to the terpene synthase family. Tpsd subfamily. Requires Mg(2+) as cofactor. The cofactor is Mn(2+).

The protein localises to the plastid. The protein resides in the chloroplast. It carries out the reaction (2E)-geranyl diphosphate = (1R,5R)-alpha-pinene + diphosphate. The protein operates within terpene metabolism; oleoresin biosynthesis. It functions in the pathway secondary metabolite biosynthesis; terpenoid biosynthesis. Monoterpene synthase (TPS) involved in the biosynthesis of monoterpene natural products included in conifer oleoresin secretions and volatile emissions; these compounds contribute to biotic and abiotic stress defense against herbivores and pathogens. Catalyzes the conversion of (2E)-geranyl diphosphate (GPP) to (+)-alpha-pinene. This chain is (+)-alpha pinene synthase 1, chloroplastic, found in Pinus contorta (Shore pine).